Consider the following 902-residue polypeptide: Cytosolic 10-formyltetrahydrofolate dehydrogenase (902 aa).

Residues methionine 1–aspartate 310 are hydrolase domain. Position 88–90 (glutamine 88–isoleucine 90) interacts with (6R)-10-formyltetrahydrofolate. Histidine 106 functions as the Proton donor in the catalytic mechanism. A (6R)-10-formyltetrahydrofolate-binding site is contributed by aspartate 142. Residues glutamate 318–methionine 395 enclose the Carrier domain. The residue at position 354 (serine 354) is an O-(pantetheine 4'-phosphoryl)serine. Residues threonine 417–tyrosine 902 form an aldehyde dehydrogenase domain region. Residues isoleucine 571–tryptophan 573, lysine 597–glutamine 600, glycine 630–glutamine 635, glycine 650–serine 651, and glutamate 673–leucine 674 contribute to the NADP(+) site. The active-site Proton acceptor is the glutamate 673. The active-site Proton donor is cysteine 707. NADP(+)-binding positions include lysine 757 and glutamate 804–phenylalanine 806.

In the N-terminal section; belongs to the GART family. The protein in the C-terminal section; belongs to the aldehyde dehydrogenase family. ALDH1L subfamily. In terms of assembly, homotetramer. In terms of processing, phosphopantetheinylation at Ser-354 by AASDHPPT is required for the formyltetrahydrofolate dehydrogenase activity.

The protein localises to the cytoplasm. It is found in the cytosol. The catalysed reaction is (6R)-10-formyltetrahydrofolate + NADP(+) + H2O = (6S)-5,6,7,8-tetrahydrofolate + CO2 + NADPH + H(+). Functionally, cytosolic 10-formyltetrahydrofolate dehydrogenase that catalyzes the NADP(+)-dependent conversion of 10-formyltetrahydrofolate to tetrahydrofolate and carbon dioxide. May also have an NADP(+)-dependent aldehyde dehydrogenase activity towards formaldehyde, acetaldehyde, propionaldehyde, and benzaldehyde. The protein is Cytosolic 10-formyltetrahydrofolate dehydrogenase (aldh1l1) of Xenopus laevis (African clawed frog).